The chain runs to 152 residues: 3-hydroxyacyl-[acyl-carrier-protein] dehydratase FabZ (152 aa).

His57 is an active-site residue.

The protein belongs to the thioester dehydratase family. FabZ subfamily.

The protein localises to the cytoplasm. The enzyme catalyses a (3R)-hydroxyacyl-[ACP] = a (2E)-enoyl-[ACP] + H2O. Its function is as follows. Involved in unsaturated fatty acids biosynthesis. Catalyzes the dehydration of short chain beta-hydroxyacyl-ACPs and long chain saturated and unsaturated beta-hydroxyacyl-ACPs. The chain is 3-hydroxyacyl-[acyl-carrier-protein] dehydratase FabZ from Xanthomonas axonopodis pv. citri (strain 306).